The following is a 258-amino-acid chain: Acyl-[acyl-carrier-protein]--UDP-N-acetylglucosamine O-acyltransferase (258 aa).

This sequence belongs to the transferase hexapeptide repeat family. LpxA subfamily. As to quaternary structure, homotrimer.

The protein resides in the cytoplasm. The enzyme catalyses a (3R)-hydroxyacyl-[ACP] + UDP-N-acetyl-alpha-D-glucosamine = a UDP-3-O-[(3R)-3-hydroxyacyl]-N-acetyl-alpha-D-glucosamine + holo-[ACP]. It functions in the pathway glycolipid biosynthesis; lipid IV(A) biosynthesis; lipid IV(A) from (3R)-3-hydroxytetradecanoyl-[acyl-carrier-protein] and UDP-N-acetyl-alpha-D-glucosamine: step 1/6. Involved in the biosynthesis of lipid A, a phosphorylated glycolipid that anchors the lipopolysaccharide to the outer membrane of the cell. The sequence is that of Acyl-[acyl-carrier-protein]--UDP-N-acetylglucosamine O-acyltransferase from Pseudomonas putida (strain W619).